Reading from the N-terminus, the 386-residue chain is GTPase Obg (386 aa).

The 159-residue stretch at 1–159 folds into the Obg domain; that stretch reads MKFVDEAVIR…RSLKLELMLL (159 aa). Residues 160–333 enclose the OBG-type G domain; it reads ADVGLLGMPN…LSLKLVDFID (174 aa). GTP is bound by residues 166–173, 191–195, 213–216, 283–286, and 314–316; these read GMPNAGKS, FTTLV, DIPG, NKKD, and SAY. 2 residues coordinate Mg(2+): Ser173 and Thr193. The interval 356–375 is disordered; it reads KDSDSLNEDFDDSDDDDFDD. A compositionally biased stretch (acidic residues) spans 360–375; that stretch reads SLNEDFDDSDDDDFDD.

This sequence belongs to the TRAFAC class OBG-HflX-like GTPase superfamily. OBG GTPase family. Monomer. It depends on Mg(2+) as a cofactor.

The protein resides in the cytoplasm. An essential GTPase which binds GTP, GDP and possibly (p)ppGpp with moderate affinity, with high nucleotide exchange rates and a fairly low GTP hydrolysis rate. Plays a role in control of the cell cycle, stress response, ribosome biogenesis and in those bacteria that undergo differentiation, in morphogenesis control. This Shewanella sediminis (strain HAW-EB3) protein is GTPase Obg.